Here is a 275-residue protein sequence, read N- to C-terminus: Large ribosomal subunit protein uL2c (275 aa).

The disordered stretch occupies residues 223–255; the sequence is VVMNPVDHPHGGGEGRAPIGRSRPVTPWGRPAL.

Belongs to the universal ribosomal protein uL2 family. Part of the 50S ribosomal subunit.

It is found in the plastid. It localises to the chloroplast. The chain is Large ribosomal subunit protein uL2c (rpl2) from Pleurastrum terricola (Filamentous green alga).